Consider the following 260-residue polypeptide: Aliphatic sulfonates import ATP-binding protein SsuB 1 (260 aa).

Residues 29–243 (VRVDGLTRSF…DITDPRFAEL (215 aa)) form the ABC transporter domain. Position 61–68 (61–68 (GRSGCGKS)) interacts with ATP.

It belongs to the ABC transporter superfamily. Aliphatic sulfonates importer (TC 3.A.1.17.2) family. As to quaternary structure, the complex is composed of two ATP-binding proteins (SsuB), two transmembrane proteins (SsuC) and a solute-binding protein (SsuA).

The protein resides in the cell membrane. It carries out the reaction ATP + H2O + aliphatic sulfonate-[sulfonate-binding protein]Side 1 = ADP + phosphate + aliphatic sulfonateSide 2 + [sulfonate-binding protein]Side 1.. Part of the ABC transporter complex SsuABC involved in aliphatic sulfonates import. Responsible for energy coupling to the transport system. The sequence is that of Aliphatic sulfonates import ATP-binding protein SsuB 1 from Streptomyces avermitilis (strain ATCC 31267 / DSM 46492 / JCM 5070 / NBRC 14893 / NCIMB 12804 / NRRL 8165 / MA-4680).